The primary structure comprises 410 residues: Acyl-CoA-binding domain-containing protein 5-B (410 aa).

In terms of domain architecture, ACB spans 12 to 101 (AQKRFEAAVK…IQLIIETLPV (90 aa)). An acyl-CoA is bound by residues 23 to 32 (IRSLPEDGSY), 43 to 47 (YSYYK), Lys-69, and Tyr-88. Over residues 119–128 (VEDDDDDDDE) the composition is skewed to acidic residues. Disordered regions lie at residues 119 to 165 (VEDD…LDDY), 221 to 242 (SDDE…GSGV), and 254 to 320 (GANM…DRMD). The stretch at 326–355 (TQITTILSELEDNMQDVLRRLTTLEQLTAS) forms a coiled coil. A transmembrane span lies at residues 382-404 (SPFTAVLTVLWPFAVHWLVQFYL).

It localises to the membrane. Functionally, binds medium- and long-chain acyl-CoA esters. The protein is Acyl-CoA-binding domain-containing protein 5-B (acbd5b) of Danio rerio (Zebrafish).